Here is an 869-residue protein sequence, read N- to C-terminus: MGNREMEELIPLVNRLQDAFSALGQSCLLELPQIAVVGGQSAGKSSVLENFVGRDFLPRGSGIVTRRPLVLQLVTSKAEYAEFLHCKGKKFTDFDEVRLEIEAETDRVTGMNKGISSIPINLRVYSPHVLNLTLIDLPGITKVPVGDQPPDIEYQIREMIMQFITRENCLILAVTPANTDLANSDALKLAKEVDPQGLRTIGVITKLDLMDEGTDARDVLENKLLPLRRGYVGVVNRSQKDIDGKKDIKAAMLAERKFFLSHPAYRHIADRMGTPHLQKVLNQQLTNHIRDTLPNFRNKLQGQLLSIEHEVEAYKNFKPEDPTRKTKALLQMVQQFAVDFEKRIEGSGDQVDTLELSGGAKINRIFHERFPFEIVKMEFNEKELRREISYAIKNIHGIRTGLFTPDMAFEAIVKKQIVKLKGPSLKSVDLVIQELINTVKKCTKKLANFPRLCEETERIVANHIREREGKTKDQVLLLIDIQVSYINTNHEDFIGFANAQQRSSQVHKKTTVGNQGTNLPPSRQIVIRKGWLTISNIGIMKGGSKGYWFVLTAESLSWYKDDEEKEKKYMLPLDNLKVRDVEKSFMSSKHIFALFNTEQRNVYKDYRFLELACDSQEDVDSWKASLLRAGVYPDKSVAENDENGQAENFSMDPQLERQVETIRNLVDSYMSIINKCIRDLIPKTIMHLMINNVKDFINSELLAQLYSSEDQNTLMEESAEQAQRRDEMLRMYQALKEALGIIGDISTATVSTPAPPPVDDSWIQHSRRSPPPSPTTQRRPTLSAPLARPTSGRGPAPAIPSPGPHSGAPPVPFRPGPLPPFPSSSDSFGAPPQVPSRPTRAPPSVPSRRPPPSPTRPTIIRPLESSLLD.

In terms of domain architecture, Dynamin-type G spans 28-294; it reads LLELPQIAVV…LTNHIRDTLP (267 aa). Residues 38–45 are G1 motif; it reads GGQSAGKS. Position 38–46 (38–46) interacts with GTP; that stretch reads GGQSAGKSS. The G2 motif stretch occupies residues 64–66; it reads VTR. Residues 136 to 139 form a G3 motif region; that stretch reads DLPG. The G4 motif stretch occupies residues 205–208; the sequence is TKLD. 205-211 contacts GTP; the sequence is TKLDLMD. Tyr231 carries the post-translational modification Phosphotyrosine. The interval 235 to 238 is G5 motif; it reads VNRS. 236–239 lines the GTP pocket; it reads NRSQ. Lys299 bears the N6-acetyllysine mark. Positions 515–621 constitute a PH domain; it reads QGTNLPPSRQ…ACDSQEDVDS (107 aa). The residue at position 603 (Tyr603) is a Phosphotyrosine. Lys604 carries the post-translational modification N6-acetyllysine. Residues 659–750 enclose the GED domain; sequence VETIRNLVDS…IIGDISTATV (92 aa). The interval 747–869 is disordered; that stretch reads TATVSTPAPP…IRPLESSLLD (123 aa). Phosphoserine occurs at positions 769 and 773. 2 stretches are compositionally biased toward pro residues: residues 797-822 and 832-855; these read PAIP…PPFP and PQVP…PSPT. At Ser853 the chain carries Phosphoserine.

Belongs to the TRAFAC class dynamin-like GTPase superfamily. Dynamin/Fzo/YdjA family.

The protein localises to the cytoplasm. It is found in the cytoskeleton. It catalyses the reaction GTP + H2O = GDP + phosphate + H(+). Its function is as follows. Microtubule-associated force-producing protein involved in producing microtubule bundles and able to bind and hydrolyze GTP. Most probably involved in vesicular trafficking processes, in particular endocytosis. This is Dynamin-3 (DNM3) from Homo sapiens (Human).